Here is a 1877-residue protein sequence, read N- to C-terminus: Protein TIC 214 (1877 aa).

6 helical membrane-spanning segments follow: residues 18-38 (IINSVVVVGLYYGFLTTFSVG), 64-84 (FITGQLMMFISIYYAPLHLAL), 87-107 (PHTITVLVLPYLLFHFFWKNH), 124-144 (LSIQCVFLNNLIFQLFNHFIL), 172-192 (VGWLIGHILFMKWVGLVLFWI), and 221-241 (IFRILLFITCVYYLGRIPSPI). Disordered regions lie at residues 246 to 313 (LKET…GKEK), 644 to 695 (DDFE…NSDR), and 774 to 795 (PEFKTSDSEEKEAKEEEKQKKE). 3 stretches are compositionally biased toward acidic residues: residues 251-268 (ETEEGGESEEETDVEIET), 281-304 (GSTEEDPSLCSEEKEDPDKIDETE), and 645-659 (DFEEQEEEDEEESTE). Residues 685-695 (TSTKDTTNSDR) show a composition bias toward basic and acidic residues.

Belongs to the TIC214 family. In terms of assembly, part of the Tic complex.

The protein resides in the plastid. It localises to the chloroplast inner membrane. In terms of biological role, involved in protein precursor import into chloroplasts. May be part of an intermediate translocation complex acting as a protein-conducting channel at the inner envelope. This chain is Protein TIC 214, found in Chloranthus spicatus (Chulantree).